The following is a 215-amino-acid chain: MPSYTLNYFNHRGRAEICRMLFAAAGVQYNDRRIETSEWSNMRSKMPCSMMPMLDIDNRHQIPQTMAIARYLAREFGFHGKNNMEMARVEYISDCFYDILDDYLRMYQDDNCRMMFQRSGDRNGSSEKRTRYQETLRRILPFMERTLEMYKSGGQFFMGDQMTMADMMCYCALENPIMEESSLLNSYPKLQALRTRVMSHLKMSPYLKKRSSTEF.

Positions 2–80 (PSYTLNYFNH…YLAREFGFHG (79 aa)) constitute a GST N-terminal domain. Residues 82-215 (NNMEMARVEY…YLKKRSSTEF (134 aa)) form the GST C-terminal domain.

This sequence belongs to the GST superfamily. Lens.

In terms of biological role, S-crystallins are structural components of squids and octopi eye lens. Contains relatively little if any GST activity. This Enteroctopus dofleini (North Pacific giant octopus) protein is S-crystallin 2.